The primary structure comprises 358 residues: Uroporphyrinogen decarboxylase (358 aa).

Substrate-binding positions include 28–32 (RQAGR), aspartate 78, tyrosine 154, serine 208, and histidine 324.

This sequence belongs to the uroporphyrinogen decarboxylase family. In terms of assembly, homodimer.

It is found in the cytoplasm. It carries out the reaction uroporphyrinogen III + 4 H(+) = coproporphyrinogen III + 4 CO2. The protein operates within porphyrin-containing compound metabolism; protoporphyrin-IX biosynthesis; coproporphyrinogen-III from 5-aminolevulinate: step 4/4. Catalyzes the decarboxylation of four acetate groups of uroporphyrinogen-III to yield coproporphyrinogen-III. The sequence is that of Uroporphyrinogen decarboxylase from Acidiphilium cryptum (strain JF-5).